The primary structure comprises 604 residues: Aspartate--tRNA(Asp/Asn) ligase (604 aa).

Residue Glu-187 coordinates L-aspartate. The interval 211-214 (QQFK) is aspartate. Positions 233 and 461 each coordinate L-aspartate. 233–235 (RDE) lines the ATP pocket. Glu-495 is a binding site for ATP. Arg-502 lines the L-aspartate pocket. 547-550 (GLDR) contributes to the ATP binding site.

The protein belongs to the class-II aminoacyl-tRNA synthetase family. Type 1 subfamily. In terms of assembly, homodimer.

It localises to the cytoplasm. It catalyses the reaction tRNA(Asx) + L-aspartate + ATP = L-aspartyl-tRNA(Asx) + AMP + diphosphate. In terms of biological role, aspartyl-tRNA synthetase with relaxed tRNA specificity since it is able to aspartylate not only its cognate tRNA(Asp) but also tRNA(Asn). Reaction proceeds in two steps: L-aspartate is first activated by ATP to form Asp-AMP and then transferred to the acceptor end of tRNA(Asp/Asn). In Chlorobium luteolum (strain DSM 273 / BCRC 81028 / 2530) (Pelodictyon luteolum), this protein is Aspartate--tRNA(Asp/Asn) ligase.